A 362-amino-acid polypeptide reads, in one-letter code: Sphingosine 1-phosphate receptor 1 (362 aa).

The Extracellular segment spans residues 1-25 (MDDLIARHYNFTGKFRKVHKDPGLK). Asn10 carries N-linked (GlcNAc...) asparagine glycosylation. A helical transmembrane segment spans residues 26–47 (ADSVVFIIVCCFIILENVLVLL). The Cytoplasmic segment spans residues 48-61 (TIWRTKKFHKPMYY). Residues 62–83 (FIGNLALSDLLAGVVYTANILL) form a helical membrane-spanning segment. At 84–95 (SGANTYKLTPTQ) the chain is on the extracellular side. The helical transmembrane segment at 96–117 (WFFREGSMFVALAASVFSLLAI) threads the bilayer. 99 to 100 (RE) contributes to the sphing-4-enine 1-phosphate binding site. Topologically, residues 118-139 (AIERHLTMLKMKLHNNGKTCRV) are cytoplasmic. A helical transmembrane segment spans residues 140 to 161 (FMLISTVWFIAAILGGLPVMGW). The Extracellular portion of the chain corresponds to 162–175 (NCIDSMNNCSTVLP). Cys163 and Cys170 are joined by a disulfide. N-linked (GlcNAc...) asparagine glycosylation is present at Asn169. Residues 176–203 (LYHKAYILFCTTVFSVILMAIVILYARI) form a helical membrane-spanning segment. The Cytoplasmic portion of the chain corresponds to 204–238 (YALVRTRSRKLVFRKVANGRGSNKSSEKSMALLKT). A helical membrane pass occupies residues 239–259 (VIIVLSCFIACWAPLFILLLL). 246-250 (FIACW) is a sphing-4-enine 1-phosphate binding site. The Extracellular portion of the chain corresponds to 260 to 270 (DVACQTLTCSI). Cys263 and Cys268 are disulfide-bonded. The helical transmembrane segment at 271 to 291 (LYKAEWFLALAVLNSAMNPLI) threads the bilayer. Topologically, residues 292–362 (YTLTSNEMRR…VSSGNITSSS (71 aa)) are cytoplasmic. Cys309 carries S-palmitoyl cysteine lipidation. The interval 328–362 (FSRSKSDNSSHPNKDEPEYSPRETIVSSGNITSSS) is disordered. Residues 329-348 (SRSKSDNSSHPNKDEPEYSP) are compositionally biased toward basic and acidic residues. Polar residues predominate over residues 352–362 (IVSSGNITSSS).

The protein belongs to the G-protein coupled receptor 1 family.

The protein localises to the cell membrane. Its function is as follows. G-protein coupled receptor for the bioactive lysosphingolipid sphingosine 1-phosphate (S1P) that seems to be coupled to the G(i) subclass of heteromeric G proteins. Signaling leads to the activation of RAC1, SRC, PTK2/FAK1 and MAP kinases. Plays an important role in cell migration, probably via its role in the reorganization of the actin cytoskeleton and the formation of lamellipodia in response to stimuli that increase the activity of the sphingosine kinase SPHK1. Required for normal chemotaxis toward sphingosine 1-phosphate. The polypeptide is Sphingosine 1-phosphate receptor 1 (s1pr1) (Danio rerio (Zebrafish)).